The primary structure comprises 157 residues: SsrA-binding protein (157 aa).

Belongs to the SmpB family.

It localises to the cytoplasm. Required for rescue of stalled ribosomes mediated by trans-translation. Binds to transfer-messenger RNA (tmRNA), required for stable association of tmRNA with ribosomes. tmRNA and SmpB together mimic tRNA shape, replacing the anticodon stem-loop with SmpB. tmRNA is encoded by the ssrA gene; the 2 termini fold to resemble tRNA(Ala) and it encodes a 'tag peptide', a short internal open reading frame. During trans-translation Ala-aminoacylated tmRNA acts like a tRNA, entering the A-site of stalled ribosomes, displacing the stalled mRNA. The ribosome then switches to translate the ORF on the tmRNA; the nascent peptide is terminated with the 'tag peptide' encoded by the tmRNA and targeted for degradation. The ribosome is freed to recommence translation, which seems to be the essential function of trans-translation. This is SsrA-binding protein from Elusimicrobium minutum (strain Pei191).